An 87-amino-acid chain; its full sequence is NADH-ubiquinone oxidoreductase chain 4L (87 aa).

The next 3 membrane-spanning stretches (helical) occupy residues 1-21, 22-42, and 57-77; these read MNLS…NRKN, IILM…LVLI, and LYII…LVAF.

Belongs to the complex I subunit 4L family. As to quaternary structure, core subunit of respiratory chain NADH dehydrogenase (Complex I) which is composed of 45 different subunits.

Its subcellular location is the mitochondrion inner membrane. It catalyses the reaction a ubiquinone + NADH + 5 H(+)(in) = a ubiquinol + NAD(+) + 4 H(+)(out). In terms of biological role, core subunit of the mitochondrial membrane respiratory chain NADH dehydrogenase (Complex I) which catalyzes electron transfer from NADH through the respiratory chain, using ubiquinone as an electron acceptor. The polypeptide is NADH-ubiquinone oxidoreductase chain 4L (ND4L) (Moniliophthora perniciosa (strain FA553 / isolate CP02) (Witches'-broom disease fungus)).